The sequence spans 294 residues: N-acetylmuramic acid 6-phosphate etherase (294 aa).

Positions Val-54–Lys-217 constitute an SIS domain. The active-site Proton donor is Glu-82. Glu-113 is an active-site residue.

The protein belongs to the GCKR-like family. MurNAc-6-P etherase subfamily. Homodimer.

The catalysed reaction is N-acetyl-D-muramate 6-phosphate + H2O = N-acetyl-D-glucosamine 6-phosphate + (R)-lactate. It functions in the pathway amino-sugar metabolism; N-acetylmuramate degradation. Its function is as follows. Specifically catalyzes the cleavage of the D-lactyl ether substituent of MurNAc 6-phosphate, producing GlcNAc 6-phosphate and D-lactate. This is N-acetylmuramic acid 6-phosphate etherase from Bacillus thuringiensis subsp. konkukian (strain 97-27).